The following is a 221-amino-acid chain: Ribosomal RNA small subunit methyltransferase Nep1 (221 aa).

Residues Gly174, Gly179, and 196–201 (VGDEPL) each bind S-adenosyl-L-methionine.

The protein belongs to the class IV-like SAM-binding methyltransferase superfamily. RNA methyltransferase NEP1 family. As to quaternary structure, homodimer.

It catalyses the reaction a pseudouridine in rRNA + S-adenosyl-L-methionine = an N(1)-methylpseudouridine in rRNA + S-adenosyl-L-homocysteine + H(+). Methyltransferase involved in ribosomal biogenesis. Specifically catalyzes the N1-methylation of the pseudouridine corresponding to position 914 in M.jannaschii 16S rRNA. The polypeptide is Ribosomal RNA small subunit methyltransferase Nep1 (Pyrobaculum neutrophilum (strain DSM 2338 / JCM 9278 / NBRC 100436 / V24Sta) (Thermoproteus neutrophilus)).